The following is an 882-amino-acid chain: Leucine--tRNA ligase (882 aa).

The 'HIGH' region motif lies at 43 to 53 (PYPSGNLHMGH). A 'KMSKS' region motif is present at residues 632–636 (TMSKS). Lys-635 provides a ligand contact to ATP.

Belongs to the class-I aminoacyl-tRNA synthetase family.

It is found in the cytoplasm. The enzyme catalyses tRNA(Leu) + L-leucine + ATP = L-leucyl-tRNA(Leu) + AMP + diphosphate. The protein is Leucine--tRNA ligase of Synechococcus sp. (strain JA-2-3B'a(2-13)) (Cyanobacteria bacterium Yellowstone B-Prime).